Consider the following 389-residue polypeptide: Large envelope protein (389 aa).

The residue at position 1 (methionine 1) is an N-acetylmethionine. Glycine 2 carries the N-myristoyl glycine; by host lipid modification. Residues 2 to 108 (GTNLSVPNPL…PPLRDTHPQA (107 aa)) are pre-S1. The segment at 2–163 (GTNLSVPNPL…LSKTGDPVPN (162 aa)) is pre-S. The Virion surface; in external conformation segment spans residues 2 to 170 (GTNLSVPNPL…VPNMENIASG (169 aa)). Residues 2 to 242 (GTNLSVPNPL…PGYRWMCLRR (241 aa)) lie on the Intravirion; in internal conformation side of the membrane. The disordered stretch occupies residues 74 to 103 (LTTVPAAPPPASTNRQSGRQPTPLSPPLRD). Residues 85–95 (STNRQSGRQPT) are compositionally biased toward polar residues. The tract at residues 109 to 163 (MQWNSTTFHQTLQDPGVRALYFPAGGSSSGTVSPAQNTVSAISSILSKTGDPVPN) is pre-S2. A helical membrane pass occupies residues 171–191 (LLGPLLVLQAGFFLLTKILTI). Residues 192–242 (PQSLDSWWTSLNFLGGTPVCLGQNSQSQISSHSPTCCPPICPGYRWMCLRR) are Intravirion; in external conformation-facing. Residues 243–263 (FIIFLCILLLCLIFLLVLLDY) traverse the membrane as a helical segment. Residues 264–337 (QGMLPVCPLI…WASVRFSWLS (74 aa)) are Virion surface-facing. N-linked (GlcNAc...) asparagine; by host glycosylation is present at asparagine 309. The helical transmembrane segment at 338-358 (LLVPFVQWFVGLSPTVWLSVI) threads the bilayer. Residues 359-364 (WMIWFW) are Intravirion-facing. A helical membrane pass occupies residues 365 to 387 (GPSLYNILSPFMPLLPIFFCLWV). The Virion surface portion of the chain corresponds to 388–389 (YI).

Belongs to the orthohepadnavirus major surface antigen family. Interacts (via its myristoylated pre-S1 region) with the host SLC10A1/NTCP; this interaction is essential for viral entry. As to quaternary structure, in its internal form (Li-HBsAg), interacts with the capsid protein and with the isoform S. Interacts with host chaperone CANX. In terms of assembly, associates with host chaperone CANX through its pre-S2 N glycan; this association may be essential for isoform M proper secretion. Interacts with isoform L. Interacts with the antigens of satellite virus HDV (HDVAgs); this interaction is required for encapsidation of HDV genomic RNA. Post-translationally, isoform M is N-terminally acetylated by host at a ratio of 90%, and N-glycosylated by host at the pre-S2 region. In terms of processing, myristoylated; this modification is essential for its interaction with the host protein SLC10A1/NTCP.

It localises to the virion membrane. The large envelope protein exists in two topological conformations, one which is termed 'external' or Le-HBsAg and the other 'internal' or Li-HBsAg. In its external conformation the protein attaches the virus to cell receptors and thereby initiating infection. This interaction determines the species specificity and liver tropism. This attachment induces virion internalization predominantly through caveolin-mediated endocytosis. The large envelope protein also assures fusion between virion membrane and endosomal membrane. In its internal conformation the protein plays a role in virion morphogenesis and mediates the contact with the nucleocapsid like a matrix protein. Functionally, the middle envelope protein plays an important role in the budding of the virion. It is involved in the induction of budding in a nucleocapsid independent way. In this process the majority of envelope proteins bud to form subviral lipoprotein particles of 22 nm of diameter that do not contain a nucleocapsid. The polypeptide is Large envelope protein (Hepatitis B virus genotype B/C subtype adw (isolate Okinawa/pODW282/1998) (HBV-B)).